Consider the following 404-residue polypeptide: Putative transporter AmpG 2 (404 aa).

A run of 12 helical transmembrane segments spans residues 11-31 (IYNI…YLLT), 49-69 (IGLF…GPLL), 84-104 (YCLI…TGFN), 109-129 (FISF…YDML), 154-174 (FRIG…IISW), 177-197 (VYRT…FYPL), 224-244 (WLII…LAVM), 261-281 (LGYK…GGFL), 294-311 (VLVY…LYSY), 315-337 (ITTL…SPFF), 353-373 (IALI…ISGY), and 378-398 (LGWG…YILI).

Belongs to the major facilitator superfamily.

Its subcellular location is the cell inner membrane. The polypeptide is Putative transporter AmpG 2 (ampG2) (Rickettsia bellii (strain RML369-C)).